The chain runs to 404 residues: Glycosylated lysosomal membrane protein (404 aa).

The first 26 residues, M1–A26, serve as a signal peptide directing secretion. Topologically, residues A27–G370 are lumenal. N-linked (GlcNAc...) asparagine glycans are attached at residues N63, N132, N157, N185, and N228. Residues I371–L391 traverse the membrane as a helical segment. Residues L392–N404 lie on the Cytoplasmic side of the membrane. Positions Y400–N404 match the Lysosomal targeting motif motif.

Belongs to the GLMP family. As to quaternary structure, interacts (via lumenal domain) with lysosomal protein MFSD1; the interaction starts while both proteins are still in the endoplasmic reticulum and is required for stabilization of MFSD1 in lysosomes but has no direct effect on its targeting to lysosomes or transporter activity. In terms of processing, highly N-glycosylated. N-glycosylation is essential for GLMP stability and for MFSD1 lysosomal localization.

The protein localises to the lysosome membrane. Its function is as follows. Required to protect lysosomal transporter MFSD1 from lysosomal proteolysis and for MFSD1 lysosomal localization. The chain is Glycosylated lysosomal membrane protein from Bos taurus (Bovine).